The chain runs to 1017 residues: Ubiquitin-like modifier-activating enzyme 1 (1017 aa).

2 repeat units span residues 26–163 (SHET…GQLF) and 419–571 (GKTL…QVVV). Residues 26–571 (SHETMKKITS…GTKGNTQVVV (546 aa)) form a 2 approximate repeats region. Residues alanine 438, aspartate 464, arginine 475, lysine 488, and 536–537 (DN) each bind ATP. The Glycyl thioester intermediate role is filled by cysteine 592. Residues 765-781 (IQTSENEPAPSSNTQQA) are compositionally biased toward polar residues. Positions 765-788 (IQTSENEPAPSSNTQQAGGDAEDD) are disordered.

It belongs to the ubiquitin-activating E1 family. Monomer.

It catalyses the reaction ATP + ubiquitin + [E1 ubiquitin-activating enzyme]-L-cysteine = AMP + diphosphate + S-ubiquitinyl-[E1 ubiquitin-activating enzyme]-L-cysteine.. It functions in the pathway protein modification; protein ubiquitination. Catalyzes the first step in ubiquitin conjugation to mark cellular proteins for degradation through the ubiquitin-proteasome system. Activates ubiquitin by first adenylating its C-terminal glycine residue with ATP, and thereafter linking this residue to the side chain of a cysteine residue in E1, yielding a ubiquitin-E1 thioester and free AMP. The protein is Ubiquitin-like modifier-activating enzyme 1 (uba1) of Dictyostelium discoideum (Social amoeba).